Reading from the N-terminus, the 545-residue chain is Chaperonin GroEL 1 (545 aa).

ATP-binding positions include 29-32 (TLGP), 86-90 (DGTTT), Gly413, 477-479 (NAA), and Asp493.

Belongs to the chaperonin (HSP60) family. In terms of assembly, forms a cylinder of 14 subunits composed of two heptameric rings stacked back-to-back. Interacts with the co-chaperonin GroES.

It is found in the cytoplasm. It carries out the reaction ATP + H2O + a folded polypeptide = ADP + phosphate + an unfolded polypeptide.. Functionally, together with its co-chaperonin GroES, plays an essential role in assisting protein folding. The GroEL-GroES system forms a nano-cage that allows encapsulation of the non-native substrate proteins and provides a physical environment optimized to promote and accelerate protein folding. In Arthrobacter sp. (strain FB24), this protein is Chaperonin GroEL 1.